Consider the following 324-residue polypeptide: Phosphatidylinositol N-acetylglucosaminyltransferase GPI2 subunit (324 aa).

At 1-79 the chain is on the cytoplasmic side; that stretch reads MDEVCAAPAP…TDFWSLVADS (79 aa). A helical transmembrane segment spans residues 80 to 100; the sequence is LPVSQHLSSVVIFASVFVSIY. Residues 101 to 107 are Lumenal-facing; it reads RNQLSCA. The helical transmembrane segment at 108 to 128 threads the bilayer; sequence LVGFVSNVSAVAAFILWDFVL. Topologically, residues 129 to 140 are cytoplasmic; sequence RKPCNNRTFPNY. Residues 141–161 form a helical membrane-spanning segment; it reads MGIVKSCILIVLTLAGLSPIL. Topologically, residues 162–171 are lumenal; the sequence is MSLTKSTSPD. Residues 172-192 form a helical membrane-spanning segment; sequence SVWAIAVWLFLANVFFHEYTT. Residues 193–223 are Cytoplasmic-facing; it reads ETIRPHVRLHNSLSTNAALSASVVLASRLEK. The chain crosses the membrane as a helical span at residues 224–244; sequence SINVFFFILFAVHWFALFPIF. Residues 245 to 250 lie on the Lumenal side of the membrane; the sequence is RKYIHV. Residues 251-271 form a helical membrane-spanning segment; sequence FSFYADMLMTLVLIISAYIAL. Over 272 to 276 the chain is Cytoplasmic; sequence NAVAS. The chain crosses the membrane as a helical span at residues 277 to 299; it reads VVIAFVFLSLIFFISFICPIWFI. Residues 300 to 324 lie on the Lumenal side of the membrane; sequence KLQRFKNEIHGPWDIALPKLGPSKG.

It belongs to the PIGC family.

It is found in the endoplasmic reticulum membrane. The catalysed reaction is a 1,2-diacyl-sn-glycero-3-phospho-(1D-myo-inositol) + UDP-N-acetyl-alpha-D-glucosamine = a 6-(N-acetyl-alpha-D-glucosaminyl)-1-(1,2-diacyl-sn-glycero-3-phospho)-1D-myo-inositol + UDP + H(+). The protein operates within glycolipid biosynthesis; glycosylphosphatidylinositol-anchor biosynthesis. Part of the complex catalyzing the transfer of N-acetylglucosamine from UDP-N-acetylglucosamine to phosphatidylinositol, the first step of GPI biosynthesis. In Schizosaccharomyces pombe (strain 972 / ATCC 24843) (Fission yeast), this protein is Phosphatidylinositol N-acetylglucosaminyltransferase GPI2 subunit (gpi2).